We begin with the raw amino-acid sequence, 239 residues long: Thymidylate kinase (239 aa).

Residue 10-17 (GINGVGKS) coordinates ATP.

Belongs to the thymidylate kinase family.

The enzyme catalyses dTMP + ATP = dTDP + ADP. The protein operates within pyrimidine metabolism; dTTP biosynthesis. Catalyzes the conversion of dTMP to dTDP. This African swine fever virus (isolate Warthog/Namibia/Wart80/1980) (ASFV) protein is Thymidylate kinase (TMK).